A 447-amino-acid polypeptide reads, in one-letter code: Signal recognition particle 54 kDa protein (447 aa).

GTP is bound by residues 103–110 (GVQGSGKT), 185–189 (DTAGR), and 245–248 (TKMD).

The protein belongs to the GTP-binding SRP family. SRP54 subfamily. Part of the signal recognition particle protein translocation system, which is composed of SRP and FtsY. Archaeal SRP consists of a 7S RNA molecule of 300 nucleotides and two protein subunits: SRP54 and SRP19.

It is found in the cytoplasm. The enzyme catalyses GTP + H2O = GDP + phosphate + H(+). Involved in targeting and insertion of nascent membrane proteins into the cytoplasmic membrane. Binds to the hydrophobic signal sequence of the ribosome-nascent chain (RNC) as it emerges from the ribosomes. The SRP-RNC complex is then targeted to the cytoplasmic membrane where it interacts with the SRP receptor FtsY. This is Signal recognition particle 54 kDa protein from Saccharolobus islandicus (strain Y.N.15.51 / Yellowstone #2) (Sulfolobus islandicus).